Reading from the N-terminus, the 582-residue chain is Sorting nexin-4 (582 aa).

Positions 1–11 (MSSDDQFTSIQ) are enriched in polar residues. The interval 1 to 111 (MSSDDQFTSI…VNQEPSSDSQ (111 aa)) is disordered. Basic and acidic residues-rich tracts occupy residues 12 to 27 (WDRD…KVNK) and 35 to 54 (DEHH…KSNE). The span at 57-70 (NIQEDDETKDDNEP) shows a compositional bias: acidic residues. The region spanning 116–249 (EINVVVTSPL…HLFVSDSADW (134 aa)) is the PX domain. Arginine 171, lysine 197, and arginine 216 together coordinate a 1,2-diacyl-sn-glycero-3-phospho-(1D-myo-inositol-3-phosphate). 2 coiled-coil regions span residues 300–329 (SKHK…KLDK) and 494–529 (SSVT…TNKI).

Belongs to the sorting nexin family.

The protein resides in the cytoplasm. It localises to the cytosol. Its subcellular location is the preautophagosomal structure membrane. The protein localises to the endosome membrane. In terms of biological role, sorting nexin, involved in the separation or division of vacuoles throughout the entire life cycle of the cells. Involved in retrieval of late-Golgi SNAREs from post-Golgi endosomes to the trans-Golgi network, for cytoplasm to vacuole transport (Cvt), and autophagy of large cargos including mitophagy, pexophagy and glycophagy. In Debaryomyces hansenii (strain ATCC 36239 / CBS 767 / BCRC 21394 / JCM 1990 / NBRC 0083 / IGC 2968) (Yeast), this protein is Sorting nexin-4 (SNX4).